Here is a 157-residue protein sequence, read N- to C-terminus: Large ribosomal subunit protein uL15 (157 aa).

It belongs to the universal ribosomal protein uL15 family. As to quaternary structure, part of the 50S ribosomal subunit.

Its function is as follows. Binds to the 23S rRNA. The sequence is that of Large ribosomal subunit protein uL15 from Ehrlichia ruminantium (strain Welgevonden).